We begin with the raw amino-acid sequence, 197 residues long: dITP/XTP pyrophosphatase (197 aa).

9-14 contacts substrate; sequence SNNAGK. Asp70 functions as the Proton acceptor in the catalytic mechanism. Asp70 lines the Mg(2+) pocket. Residues Ser71, 153–156, Lys176, and 181–182 contribute to the substrate site; these read FGYD and HR.

This sequence belongs to the HAM1 NTPase family. In terms of assembly, homodimer. Mg(2+) serves as cofactor.

It catalyses the reaction XTP + H2O = XMP + diphosphate + H(+). The enzyme catalyses dITP + H2O = dIMP + diphosphate + H(+). The catalysed reaction is ITP + H2O = IMP + diphosphate + H(+). In terms of biological role, pyrophosphatase that catalyzes the hydrolysis of nucleoside triphosphates to their monophosphate derivatives, with a high preference for the non-canonical purine nucleotides XTP (xanthosine triphosphate), dITP (deoxyinosine triphosphate) and ITP. Seems to function as a house-cleaning enzyme that removes non-canonical purine nucleotides from the nucleotide pool, thus preventing their incorporation into DNA/RNA and avoiding chromosomal lesions. This is dITP/XTP pyrophosphatase from Chromobacterium violaceum (strain ATCC 12472 / DSM 30191 / JCM 1249 / CCUG 213 / NBRC 12614 / NCIMB 9131 / NCTC 9757 / MK).